Reading from the N-terminus, the 564-residue chain is E3 ubiquitin-protein ligase RNF168 (564 aa).

An RING-type zinc finger spans residues 16–55 (CGICMEILVEPVTLPCNHTLCNPCFQSTVEKANLCCPFCR). Position 70 is a phosphoserine (serine 70). Positions 110–128 (LSKPGELRREYEEEISKVE) match the LR motif 1 motif. Serine 134 carries the post-translational modification Phosphoserine. The short motif at 143–151 (EEYIQRLLA) is the UMI motif element. 2 disordered regions span residues 149-179 (LLAEEEEEEKRRTERRRSEMEEQLRGDEELA) and 193-291 (NILA…QGPE). The span at 157–179 (EKRRTERRRSEMEEQLRGDEELA) shows a compositional bias: basic and acidic residues. The short motif at 168 to 191 (MEEQLRGDEELARRLSTSINSNYE) is the MIU motif 1 element. At serine 197 the chain carries Phosphoserine. A Glycyl lysine isopeptide (Lys-Gly) (interchain with G-Cter in SUMO2) cross-link involves residue lysine 210. Residues 242 to 259 (KTEHGEDMCKSKETDSSD) show a composition bias toward basic and acidic residues. Residues 275-288 (PTHSPQTCPETQGQ) show a composition bias toward polar residues. A phosphothreonine mark is found at threonine 348 and threonine 361. Phosphoserine is present on residues serine 413 and serine 414. An MIU motif 2 motif is present at residues 438 to 461 (RHKQEEQDRLLALQLQKEADKEKM). A disordered region spans residues 455-564 (EADKEKMVPN…QKSILQMFQR (110 aa)). The LR motif 2 signature appears at 465–476 (RQKGSPDQYQLR). Positions 466–480 (QKGSPDQYQLRTSSP) are enriched in polar residues. Serine 469 bears the Phosphoserine mark. The segment covering 491 to 515 (NVKDRNSPKQTADRSKSQRSRKGEY) has biased composition (basic and acidic residues). 2 stretches are compositionally biased toward polar residues: residues 519–531 (FESTWKGSVNGTK) and 555–564 (QKSILQMFQR). Lysine 524 participates in a covalent cross-link: Glycyl lysine isopeptide (Lys-Gly) (interchain with G-Cter in SUMO2).

This sequence belongs to the RNF168 family. As to quaternary structure, monomer. Interacts with UBE2N/UBC13. Post-translationally, sumoylated with SUMO1 by PIAS4 in response to double-strand breaks (DSBs). In terms of processing, ubiquitinated.

The protein localises to the nucleus. The catalysed reaction is S-ubiquitinyl-[E2 ubiquitin-conjugating enzyme]-L-cysteine + [acceptor protein]-L-lysine = [E2 ubiquitin-conjugating enzyme]-L-cysteine + N(6)-ubiquitinyl-[acceptor protein]-L-lysine.. The protein operates within protein modification; protein ubiquitination. Its function is as follows. E3 ubiquitin-protein ligase required for accumulation of repair proteins to sites of DNA damage. Acts with UBE2N/UBC13 to amplify the RNF8-dependent histone ubiquitination. Recruited to sites of DNA damage at double-strand breaks (DSBs) by binding to ubiquitinated histone H2A and H2AX and amplifies the RNF8-dependent H2A ubiquitination, promoting the formation of 'Lys-63'-linked ubiquitin conjugates. This leads to concentrate ubiquitinated histones H2A and H2AX at DNA lesions to the threshold required for recruitment of TP53BP1 and BRCA1. Also recruited at DNA interstrand cross-links (ICLs) sites and promotes accumulation of 'Lys-63'-linked ubiquitination of histones H2A and H2AX, leading to recruitment of FAAP20 and Fanconi anemia (FA) complex, followed by interstrand cross-link repair. H2A ubiquitination also mediates the ATM-dependent transcriptional silencing at regions flanking DSBs in cis, a mechanism to avoid collision between transcription and repair intermediates. Also involved in class switch recombination in immune system, via its role in regulation of DSBs repair. Following DNA damage, promotes the ubiquitination and degradation of JMJD2A/KDM4A in collaboration with RNF8, leading to unmask H4K20me2 mark and promote the recruitment of TP53BP1 at DNA damage sites. Not able to initiate 'Lys-63'-linked ubiquitination in vitro; possibly due to partial occlusion of the UBE2N/UBC13-binding region. Catalyzes monoubiquitination of 'Lys-13' and 'Lys-15' of nucleosomal histone H2A (H2AK13Ub and H2AK15Ub, respectively). In Rattus norvegicus (Rat), this protein is E3 ubiquitin-protein ligase RNF168.